The chain runs to 345 residues: tRNA-specific 2-thiouridylase MnmA (345 aa).

ATP contacts are provided by residues 6–13 (AMSGGVDS) and leucine 32. Cysteine 100 (nucleophile) is an active-site residue. Cysteines 100 and 197 form a disulfide. Glycine 124 is a binding site for ATP. The segment at 146-148 (RDQ) is interaction with tRNA. Residue cysteine 197 is the Cysteine persulfide intermediate of the active site.

The protein belongs to the MnmA/TRMU family.

The protein localises to the cytoplasm. It carries out the reaction S-sulfanyl-L-cysteinyl-[protein] + uridine(34) in tRNA + AH2 + ATP = 2-thiouridine(34) in tRNA + L-cysteinyl-[protein] + A + AMP + diphosphate + H(+). Catalyzes the 2-thiolation of uridine at the wobble position (U34) of tRNA, leading to the formation of s(2)U34. In Acidiphilium cryptum (strain JF-5), this protein is tRNA-specific 2-thiouridylase MnmA.